A 131-amino-acid polypeptide reads, in one-letter code: Translation initiation factor 5A (131 aa).

Lys-36 is modified (hypusine).

It belongs to the eIF-5A family.

It is found in the cytoplasm. In terms of biological role, functions by promoting the formation of the first peptide bond. The sequence is that of Translation initiation factor 5A (eIF5A) from Metallosphaera sedula (strain ATCC 51363 / DSM 5348 / JCM 9185 / NBRC 15509 / TH2).